The chain runs to 353 residues: UDP-N-acetylglucosamine--N-acetylmuramyl-(pentapeptide) pyrophosphoryl-undecaprenol N-acetylglucosamine transferase (353 aa).

UDP-N-acetyl-alpha-D-glucosamine contacts are provided by residues 10 to 12 (TGG), Asn124, Ser183, and Gln283.

This sequence belongs to the glycosyltransferase 28 family. MurG subfamily.

It localises to the cell inner membrane. The catalysed reaction is di-trans,octa-cis-undecaprenyl diphospho-N-acetyl-alpha-D-muramoyl-L-alanyl-D-glutamyl-meso-2,6-diaminopimeloyl-D-alanyl-D-alanine + UDP-N-acetyl-alpha-D-glucosamine = di-trans,octa-cis-undecaprenyl diphospho-[N-acetyl-alpha-D-glucosaminyl-(1-&gt;4)]-N-acetyl-alpha-D-muramoyl-L-alanyl-D-glutamyl-meso-2,6-diaminopimeloyl-D-alanyl-D-alanine + UDP + H(+). Its pathway is cell wall biogenesis; peptidoglycan biosynthesis. Cell wall formation. Catalyzes the transfer of a GlcNAc subunit on undecaprenyl-pyrophosphoryl-MurNAc-pentapeptide (lipid intermediate I) to form undecaprenyl-pyrophosphoryl-MurNAc-(pentapeptide)GlcNAc (lipid intermediate II). The sequence is that of UDP-N-acetylglucosamine--N-acetylmuramyl-(pentapeptide) pyrophosphoryl-undecaprenol N-acetylglucosamine transferase from Helicobacter pylori (strain G27).